Here is a 723-residue protein sequence, read N- to C-terminus: MRSLVLLGMSSLATANSLWSSKAASWDTTNEAYTLGNGKLGVMPFGEPGAEKLNLNHDELWEGGPFEVNGYRGGNPNSSMTEILSEVRDEIWKKGTGNDSRLHGDTDGYGSFHSLANLTIAIDGIDKVSDYTRSLDLGTGIHTTTYSTGKGKYTTDVYCSYPAQVCIYKLNSTATLSKVTIYFDQLVEESSLWNATCDSDFARLRGVTQEGPPRGMTYDTIARSSIPGRCDSSTGKLAINARNSSSLTIVIGAGTDFDGTKGTAATDYTFKGEDPAEYVEKITSSALSQSESKLRTEHIEDYSGLMSAFTLDLPDTQDSTGTELSTLITNYNANKTDGDPYLEKLLFDYGRHLFISSSRANSLPPNLQGVWSPTKNAAWSGDYHANINLQMNLWGAEATGLGELTVAVFNYMEQNWMPRGAETAELLYGGAGWVTHDEMNIFGHTGSLVVNPCTSPEQGPTTFGCTHWQQLIHQVYENAIQGAEIAGETDSTLLKDIKDQLPRLDKGLHIGTWGQIKEWKLPDSYDYEKEGNEHRHLSHLVGWYPGWSLSSYFNGYNNATIQSAVNTSLISRGVGLYTNAGWEKVWRSACWARLNNTEKAHYELRLTIDQNIGQSGLSLYSGGDTPSGAFQIDANFGYLGAVLSMLVVDMPLDSTHSEDDVRTVVLGPAIPAAWAGGSVKGLRLRGGGSVDFSWDSEGLVDKASATGVSSNVRIVNVEGTVLV.

The signal sequence occupies residues 1–15 (MRSLVLLGMSSLATA). N77, N98, N117, N171, N194, N243, N334, N558, N566, and N595 each carry an N-linked (GlcNAc...) asparagine glycan.

The protein belongs to the glycosyl hydrolase 95 family.

Its subcellular location is the secreted. It carries out the reaction an alpha-L-fucoside + H2O = L-fucose + an alcohol. Its function is as follows. Alpha-fucosidase involved in degradation of fucosylated xyloglucans. Hydrolyzes alpha-1,2-linked fucose. The sequence is that of Probable alpha-fucosidase A (afcA) from Aspergillus oryzae (strain ATCC 42149 / RIB 40) (Yellow koji mold).